The following is a 505-amino-acid chain: Maturase K (505 aa).

The protein belongs to the intron maturase 2 family. MatK subfamily.

Its subcellular location is the plastid. It localises to the chloroplast. Usually encoded in the trnK tRNA gene intron. Probably assists in splicing its own and other chloroplast group II introns. The chain is Maturase K from Gomphrena haageana (Haage's globe-amaranth).